Consider the following 321-residue polypeptide: MSLLVWGATLISGFIIVFALMPSLIRYFRARKEGQMIREEGPKWHEKKSGTPTMGGLLFIIAILVTTLWVGGWQHQLQPTTWILMFILVLYGALGFWDDSIKLWRKQNEGLKAWQKLLGQVIGAVILTLVYQHEHLPMALRIPGLGVWSLGIWYMLFAIIWLVGFSNAVNLTDGLDGLVAGQATIAFGAYAVIAYAQNQYNVMLFCLAVVGSLLGFFVYNHKPAKIFMGDMGSLALGGALAAVSILLHHELSLLLIGIIFVIETASVILQVASFKLTGKRIFLMSPIHHHFEMKGWSEWKIDIVFWSIGLVAAVISVATII.

Helical transmembrane passes span 1–21, 53–73, 77–97, 110–130, 145–165, 174–194, 200–220, 226–248, and 301–321; these read MSLL…FALM, TMGG…VGGW, LQPT…LGFW, GLKA…LTLV, LGVW…LVGF, GLDG…AVIA, YNVM…FVYN, IFMG…ILLH, and IDIV…ATII.

The protein belongs to the glycosyltransferase 4 family. MraY subfamily. It depends on Mg(2+) as a cofactor.

It localises to the cell membrane. It catalyses the reaction UDP-N-acetyl-alpha-D-muramoyl-L-alanyl-gamma-D-glutamyl-L-lysyl-D-alanyl-D-alanine + di-trans,octa-cis-undecaprenyl phosphate = Mur2Ac(oyl-L-Ala-gamma-D-Glu-L-Lys-D-Ala-D-Ala)-di-trans,octa-cis-undecaprenyl diphosphate + UMP. The protein operates within cell wall biogenesis; peptidoglycan biosynthesis. Functionally, catalyzes the initial step of the lipid cycle reactions in the biosynthesis of the cell wall peptidoglycan: transfers peptidoglycan precursor phospho-MurNAc-pentapeptide from UDP-MurNAc-pentapeptide onto the lipid carrier undecaprenyl phosphate, yielding undecaprenyl-pyrophosphoryl-MurNAc-pentapeptide, known as lipid I. In Lactiplantibacillus plantarum (strain ATCC BAA-793 / NCIMB 8826 / WCFS1) (Lactobacillus plantarum), this protein is Phospho-N-acetylmuramoyl-pentapeptide-transferase.